Reading from the N-terminus, the 317-residue chain is Protein-methionine-sulfoxide reductase catalytic subunit MsrP (317 aa).

Residues methionine 1 to alanine 40 constitute a signal peptide (tat-type signal). Mo-molybdopterin is bound by residues asparagine 71, tyrosine 74–glutamate 75, cysteine 129, threonine 164, asparagine 216, arginine 221, and serine 232–lysine 234.

It belongs to the MsrP family. In terms of assembly, heterodimer of a catalytic subunit (MsrP) and a heme-binding subunit (MsrQ). Mo-molybdopterin serves as cofactor. Post-translationally, predicted to be exported by the Tat system. The position of the signal peptide cleavage has not been experimentally proven.

The protein localises to the periplasm. It carries out the reaction L-methionyl-[protein] + a quinone + H2O = L-methionyl-(S)-S-oxide-[protein] + a quinol. It catalyses the reaction L-methionyl-[protein] + a quinone + H2O = L-methionyl-(R)-S-oxide-[protein] + a quinol. Part of the MsrPQ system that repairs oxidized periplasmic proteins containing methionine sulfoxide residues (Met-O), using respiratory chain electrons. Thus protects these proteins from oxidative-stress damage caused by reactive species of oxygen and chlorine generated by the host defense mechanisms. MsrPQ is essential for the maintenance of envelope integrity under bleach stress, rescuing a wide series of structurally unrelated periplasmic proteins from methionine oxidation. The catalytic subunit MsrP is non-stereospecific, being able to reduce both (R-) and (S-) diastereoisomers of methionine sulfoxide. The polypeptide is Protein-methionine-sulfoxide reductase catalytic subunit MsrP (Histophilus somni (strain 2336) (Haemophilus somnus)).